The following is a 373-amino-acid chain: DNA dC-&gt;dU-editing enzyme APOBEC-3F (373 aa).

CMP/dCMP-type deaminase domains are found at residues 29 to 137 and 174 to 321; these read RRNT…LCRL and DDNY…LRSL. Residue Lys52 forms a (Microbial infection) Glycyl lysine isopeptide (Lys-Gly) (interchain with G-Cter in ubiquitin) linkage. The Zn(2+) site is built by His65, Cys96, and Cys99. Lys234 is covalently cross-linked ((Microbial infection) Glycyl lysine isopeptide (Lys-Gly) (interchain with G-Cter in ubiquitin)). His249 provides a ligand contact to Zn(2+). Glu251 (proton donor) is an active-site residue. Zn(2+) contacts are provided by Cys280 and Cys283. Cys280 and Cys283 form a disulfide bridge. (Microbial infection) Glycyl lysine isopeptide (Lys-Gly) (interchain with G-Cter in ubiquitin) cross-links involve residues Lys334, Lys352, Lys355, and Lys358.

This sequence belongs to the cytidine and deoxycytidylate deaminase family. In terms of assembly, homodimer. Interacts with APOBEC3G in an RNA-dependent manner. Interacts with AGO1, AGO2 and AGO3. As to quaternary structure, (Microbial infection) Interacts with HIV-1 Vif, leading to its ubiquitination and degradation by the proteasome. In the absence of Vif protein, specifically packaged into HIV-1 virions. The cofactor is Zn(2+). Post-translationally, (Microbial infection) Following infection by HIV-1, ubiquitinated by a cullin-5-RING E3 ubiquitin-protein ligase complex (ECS complex) hijacked by the HIV-1 Vif protein, leading to its degradation. As to expression, widely expressed. Highly expressed in ovary.

The protein resides in the cytoplasm. It localises to the P-body. The catalysed reaction is a 2'-deoxycytidine in single-stranded DNA + H2O + H(+) = a 2'-deoxyuridine in single-stranded DNA + NH4(+). With respect to regulation, (Microbial infection) Antiviral activity is neutralized by the HIV-1 virion infectivity factor (Vif), that prevents its incorporation into progeny virions by both inhibiting its translation and/or by inducing its ubiquitination and subsequent degradation by the 26S proteasome. In terms of biological role, DNA deaminase (cytidine deaminase) which acts as an inhibitor of retrovirus replication and retrotransposon mobility via deaminase-dependent and -independent mechanisms. Exhibits antiviral activity against viruse such as HIV-1 or HIV-2. After the penetration of retroviral nucleocapsids into target cells of infection and the initiation of reverse transcription, it can induce the conversion of cytosine to uracil in the minus-sense single-strand viral DNA, leading to G-to-A hypermutations in the subsequent plus-strand viral DNA. The resultant detrimental levels of mutations in the proviral genome, along with a deamination-independent mechanism that works prior to the proviral integration, together exert efficient antiretroviral effects in infected target cells. Selectively targets single-stranded DNA and does not deaminate double-stranded DNA or single- or double-stranded RNA. Exhibits antiviral activity also against hepatitis B virus (HBV), equine infectious anemia virus (EIAV), xenotropic MuLV-related virus (XMRV) and simian foamy virus (SFV) and may inhibit the mobility of LTR and non-LTR retrotransposons. May also play a role in the epigenetic regulation of gene expression through the process of active DNA demethylation. This is DNA dC-&gt;dU-editing enzyme APOBEC-3F from Homo sapiens (Human).